The chain runs to 586 residues: CTP synthase 2 (586 aa).

Residues 300–554 form the Glutamine amidotransferase type-1 domain; sequence SIALVGKYTK…LAATGNLNAY (255 aa). Residues Cys399, His526, and Glu528 each act as for GATase activity in the active site. Positions 563–586 are disordered; it reads SSDRYSDASDDSFSEPRIAELEIS. Phosphoserine occurs at positions 568, 571, and 574.

Belongs to the CTP synthase family.

It carries out the reaction UTP + L-glutamine + ATP + H2O = CTP + L-glutamate + ADP + phosphate + 2 H(+). Its pathway is pyrimidine metabolism; CTP biosynthesis via de novo pathway; CTP from UDP: step 2/2. In terms of biological role, catalyzes the ATP-dependent amination of UTP to CTP with either L-glutamine or ammonia as the source of nitrogen. Constitutes the rate-limiting enzyme in the synthesis of cytosine nucleotides. This is CTP synthase 2 (CTPS2) from Homo sapiens (Human).